We begin with the raw amino-acid sequence, 500 residues long: Glutathione reductase (500 aa).

FAD is bound by residues serine 12 and glycine 13. Position 12 (serine 12) interacts with glutathione. Glutathione is bound at residue arginine 19. FAD contacts are provided by glutamate 32, threonine 39, cysteine 40, and lysine 48. Cysteine 40 and cysteine 45 are joined by a disulfide. Residue tyrosine 95 participates in glutathione binding. Alanine 111 provides a ligand contact to FAD. The NADP(+) site is built by isoleucine 187, glutamate 190, arginine 207, arginine 213, and glycine 272. 2 residues coordinate FAD: aspartate 312 and threonine 354. Arginine 362 lines the glutathione pocket. NADP(+) is bound at residue valine 384. Histidine 485 is a binding site for FAD. Residue histidine 485 is the Proton acceptor of the active site.

The protein belongs to the class-I pyridine nucleotide-disulfide oxidoreductase family. Homodimer. FAD serves as cofactor.

Its subcellular location is the cytoplasm. The catalysed reaction is 2 glutathione + NADP(+) = glutathione disulfide + NADPH + H(+). Catalyzes the reduction of glutathione disulfide (GSSG) to reduced glutathione (GSH). Constitutes the major mechanism to maintain a high GSH:GSSG ratio in the cytosol. In Plasmodium falciparum (isolate K1 / Thailand), this protein is Glutathione reductase.